A 159-amino-acid polypeptide reads, in one-letter code: ATP synthase subunit b 2 (159 aa).

A helical transmembrane segment spans residues 1–21 (MDATFWAFIALVIFVAIVVYM).

Belongs to the ATPase B chain family. F-type ATPases have 2 components, F(1) - the catalytic core - and F(0) - the membrane proton channel. F(1) has five subunits: alpha(3), beta(3), gamma(1), delta(1), epsilon(1). F(0) has three main subunits: a(1), b(2) and c(10-14). The alpha and beta chains form an alternating ring which encloses part of the gamma chain. F(1) is attached to F(0) by a central stalk formed by the gamma and epsilon chains, while a peripheral stalk is formed by the delta and b chains.

It is found in the cell inner membrane. In terms of biological role, f(1)F(0) ATP synthase produces ATP from ADP in the presence of a proton or sodium gradient. F-type ATPases consist of two structural domains, F(1) containing the extramembraneous catalytic core and F(0) containing the membrane proton channel, linked together by a central stalk and a peripheral stalk. During catalysis, ATP synthesis in the catalytic domain of F(1) is coupled via a rotary mechanism of the central stalk subunits to proton translocation. Functionally, component of the F(0) channel, it forms part of the peripheral stalk, linking F(1) to F(0). This Brucella ovis (strain ATCC 25840 / 63/290 / NCTC 10512) protein is ATP synthase subunit b 2.